We begin with the raw amino-acid sequence, 140 residues long: Large ribosomal subunit protein uL16 (140 aa).

Basic residues predominate over residues 1–14 (MLSPRRTKFRKQQR). The segment at 1 to 22 (MLSPRRTKFRKQQRGRMEGAAT) is disordered.

Belongs to the universal ribosomal protein uL16 family. In terms of assembly, part of the 50S ribosomal subunit.

Its function is as follows. Binds 23S rRNA and is also seen to make contacts with the A and possibly P site tRNAs. The sequence is that of Large ribosomal subunit protein uL16 from Cyanothece sp. (strain PCC 7425 / ATCC 29141).